The primary structure comprises 499 residues: Sialic acid-binding Ig-like lectin 8 (499 aa).

Positions 1-16 (MLLLLLLLPLLWGTKG) are cleaved as a signal peptide. Topologically, residues 17–363 (MEGDRQYGDG…RPVSQVTLAA (347 aa)) are extracellular. Residues tyrosine 23, 72-75 (RPYQ), arginine 125, and 134-138 (SYKSQ) each bind a carbohydrate. The Ig-like V-type domain occupies 40-123 (GLCVHVPCSF…ARKRDKGSYF (84 aa)). 3 cysteine pairs are disulfide-bonded: cysteine 42–cysteine 181, cysteine 47–cysteine 107, and cysteine 175–cysteine 224. 2 consecutive Ig-like C2-type domains span residues 157–240 (PDIL…STVR) and 246–344 (PPWN…LSLS). Asparagine 172 carries N-linked (GlcNAc...) asparagine glycosylation. N-linked (GlcNAc...) asparagine glycans are attached at residues asparagine 249 and asparagine 267. Cysteines 283 and 328 form a disulfide. Residues 364 to 384 (VGGAGATALAFLSFCIIFIIV) form a helical membrane-spanning segment. The Cytoplasmic segment spans residues 385-499 (RSCRKKSARP…HNPSSKEVRG (115 aa)). The disordered stretch occupies residues 410 to 443 (RGSASQGPLTESWKDGNPLKKPPPAVAPSSGEEG). The ITIM motif motif lies at 445-450 (LHYATL). Disordered regions lie at residues 451-470 (SFHKVKPQDPQGQEATDSEY) and 478-499 (RETAETQACLRNHNPSSKEVRG). Residues 468-473 (SEYSEI) carry the SLAM-like motif motif.

This sequence belongs to the immunoglobulin superfamily. SIGLEC (sialic acid binding Ig-like lectin) family. In terms of tissue distribution, expressed specifically on blood cells namely basophil, mast cells and eosinophils.

Its subcellular location is the membrane. Functionally, putative adhesion molecule that mediates sialic-acid dependent binding to blood cells. Preferentially binds to alpha-2,3-linked sialic acid. Also binds to alpha-2,6-linked sialic acid. The sialic acid recognition site may be masked by cis interactions with sialic acids on the same cell surface. Recognizes simultaneously epitopes having a terminal N-acetylneuraminic acid (sialic acid) and an underlying 6-O-sulfated galactose. Preferentially binds to Gal-6-sulfated sialyl-Lewis X glycan epitopes. This chain is Sialic acid-binding Ig-like lectin 8 (SIGLEC8), found in Homo sapiens (Human).